A 498-amino-acid chain; its full sequence is ATP synthase subunit beta, chloroplastic (498 aa).

ATP is bound at residue 172-179 (GGAGVGKT).

The protein belongs to the ATPase alpha/beta chains family. F-type ATPases have 2 components, CF(1) - the catalytic core - and CF(0) - the membrane proton channel. CF(1) has five subunits: alpha(3), beta(3), gamma(1), delta(1), epsilon(1). CF(0) has four main subunits: a(1), b(1), b'(1) and c(9-12).

It localises to the plastid. The protein resides in the chloroplast thylakoid membrane. It carries out the reaction ATP + H2O + 4 H(+)(in) = ADP + phosphate + 5 H(+)(out). Produces ATP from ADP in the presence of a proton gradient across the membrane. The catalytic sites are hosted primarily by the beta subunits. This Populus tremuloides (Quaking aspen) protein is ATP synthase subunit beta, chloroplastic.